The primary structure comprises 259 residues: Chymotrypsin-1 (259 aa).

A signal peptide spans 1–17 (MLRKVFAVVSVLLVVSA). Positions 18 to 32 (AKVTKLVLDDNYVNR) are cleaved as a propeptide — activation peptide. Residues 33–255 (VVGGEVAKNG…YHDWVRTTMA (223 aa)) form the Peptidase S1 domain. C59 and C75 form a disulfide bridge. Catalysis depends on charge relay system residues H74 and D119. 2 disulfides stabilise this stretch: C182-C198 and C208-C232. S212 functions as the Charge relay system in the catalytic mechanism.

It belongs to the peptidase S1 family. As to expression, after blood feeding, expression is induced in the midgut epithelium, followed by secretion into the midgut lumen.

Its subcellular location is the secreted. It catalyses the reaction Preferential cleavage: Tyr-|-Xaa, Trp-|-Xaa, Phe-|-Xaa, Leu-|-Xaa.. This is Chymotrypsin-1 (CHYM1) from Anopheles gambiae (African malaria mosquito).